The chain runs to 236 residues: DNA repair protein RecO (236 aa).

Belongs to the RecO family.

Functionally, involved in DNA repair and RecF pathway recombination. This is DNA repair protein RecO from Haemophilus influenzae (strain PittGG).